Reading from the N-terminus, the 821-residue chain is Leucine--tRNA ligase (821 aa).

The 'HIGH' region signature appears at 44–54; the sequence is PYPSGRIHMGH. The short motif at 589-593 is the 'KMSKS' region element; sequence KMSKS. Residue K592 coordinates ATP.

This sequence belongs to the class-I aminoacyl-tRNA synthetase family.

It is found in the cytoplasm. The catalysed reaction is tRNA(Leu) + L-leucine + ATP = L-leucyl-tRNA(Leu) + AMP + diphosphate. The sequence is that of Leucine--tRNA ligase from Campylobacter concisus (strain 13826).